We begin with the raw amino-acid sequence, 300 residues long: Porphobilinogen deaminase (300 aa).

An S-(dipyrrolylmethanemethyl)cysteine modification is found at Cys239.

This sequence belongs to the HMBS family. In terms of assembly, monomer. Dipyrromethane serves as cofactor.

It catalyses the reaction 4 porphobilinogen + H2O = hydroxymethylbilane + 4 NH4(+). It functions in the pathway porphyrin-containing compound metabolism; protoporphyrin-IX biosynthesis; coproporphyrinogen-III from 5-aminolevulinate: step 2/4. In terms of biological role, tetrapolymerization of the monopyrrole PBG into the hydroxymethylbilane pre-uroporphyrinogen in several discrete steps. The sequence is that of Porphobilinogen deaminase from Francisella tularensis subsp. holarctica (strain FTNF002-00 / FTA).